A 617-amino-acid polypeptide reads, in one-letter code: Kelch-like protein diablo (617 aa).

A disordered region spans residues 1 to 55 (MGDPLLPGSTGLGSGGTAAATGGTGTTGTGLGSGGTSGTERPPSPARLTHTSEKH). Gly residues predominate over residues 10–37 (TGLGSGGTAAATGGTGTTGTGLGSGGTS). A BTB domain is found at 73–140 (CDVVLNVGGR…CYTAHIIVEE (68 aa)). A BACK domain is found at 175–277 (CLGIRAFADT…SPKFLVGTVG (103 aa)). 6 Kelch repeats span residues 324–370 (VLFA…VLND), 372–418 (LYAV…VLDG), 419–465 (FLYA…VLSG), 467–512 (LYAI…VFNN), 514–559 (IYAV…VVNG), and 560–606 (QLYA…VMRA).

It participates in protein modification; protein ubiquitination. Functionally, probable substrate-specific adapter of an E3 ubiquitin-protein ligase complex which mediates the ubiquitination and subsequent proteasomal degradation of target proteins. May have a role in synapse differentiation and growth. The polypeptide is Kelch-like protein diablo (Drosophila mojavensis (Fruit fly)).